A 549-amino-acid polypeptide reads, in one-letter code: Chaperonin GroEL 5 (549 aa).

ATP contacts are provided by residues 30-33 (TLGP), Lys51, 87-91 (DGTTT), Gly415, and Asp495.

The protein belongs to the chaperonin (HSP60) family. Forms a cylinder of 14 subunits composed of two heptameric rings stacked back-to-back. Interacts with the co-chaperonin GroES.

The protein resides in the cytoplasm. The enzyme catalyses ATP + H2O + a folded polypeptide = ADP + phosphate + an unfolded polypeptide.. Its function is as follows. Together with its co-chaperonin GroES, plays an essential role in assisting protein folding. The GroEL-GroES system forms a nano-cage that allows encapsulation of the non-native substrate proteins and provides a physical environment optimized to promote and accelerate protein folding. The chain is Chaperonin GroEL 5 from Mesorhizobium japonicum (strain LMG 29417 / CECT 9101 / MAFF 303099) (Mesorhizobium loti (strain MAFF 303099)).